A 219-amino-acid chain; its full sequence is Lipid transferase CIDEA (219 aa).

Positions 33 to 110 (PARPFRVSNH…ILEKGQKWMP (78 aa)) constitute a CIDE-N domain. The interval 163–180 (CTGLKGLLRSLLRFLSYS) is amphipathic helix.

The protein belongs to the CIDE family. In terms of assembly, homodimer. Interacts with CIDEC. Directly interacts with CEBPB. Interacts with isoform CLSTN3beta of CLSTN3; inhibiting the lipid transferase activity of CIDEA. Expressed in omental and subcutaneous adipose tissue (at protein level).

It localises to the lipid droplet. It is found in the nucleus. The catalysed reaction is a triacyl-sn-glycerol(in) = a triacyl-sn-glycerol(out). Lipid transferase that promotes unilocular lipid droplet formation by mediating lipid droplet fusion. Lipid droplet fusion promotes their enlargement, restricting lipolysis and favoring lipid storage. Localizes on the lipid droplet surface, at focal contact sites between lipid droplets, and mediates atypical lipid droplet fusion by promoting directional net neutral lipid transfer from the smaller to larger lipid droplets. The transfer direction may be driven by the internal pressure difference between the contacting lipid droplet pair and occurs at a lower rate than that promoted by CIDEC. May also act as a CEBPB coactivator in epithelial cells to control the expression of a subset of CEBPB downstream target genes, including ID2, IGF1, PRLR, SOCS1, SOCS3, XDH, but not casein. By interacting with CEBPB, strengthens the association of CEBPB with the XDH promoter, increases histone acetylation and dissociates HDAC1 from the promoter. When overexpressed, induces apoptosis; the physiological significance of its role in apoptosis is unclear. This Homo sapiens (Human) protein is Lipid transferase CIDEA.